The sequence spans 427 residues: UDP-N-acetylglucosamine--N-acetylmuramyl-(pentapeptide) pyrophosphoryl-undecaprenol N-acetylglucosamine transferase (427 aa).

UDP-N-acetyl-alpha-D-glucosamine contacts are provided by residues 29 to 31 (TGG), asparagine 141, arginine 177, serine 205, isoleucine 258, and glutamine 303. The disordered stretch occupies residues 408 to 427 (SLHPIPDSRFPIRTSAGGAQ).

It belongs to the glycosyltransferase 28 family. MurG subfamily.

The protein localises to the cell inner membrane. The enzyme catalyses di-trans,octa-cis-undecaprenyl diphospho-N-acetyl-alpha-D-muramoyl-L-alanyl-D-glutamyl-meso-2,6-diaminopimeloyl-D-alanyl-D-alanine + UDP-N-acetyl-alpha-D-glucosamine = di-trans,octa-cis-undecaprenyl diphospho-[N-acetyl-alpha-D-glucosaminyl-(1-&gt;4)]-N-acetyl-alpha-D-muramoyl-L-alanyl-D-glutamyl-meso-2,6-diaminopimeloyl-D-alanyl-D-alanine + UDP + H(+). Its pathway is cell wall biogenesis; peptidoglycan biosynthesis. Functionally, cell wall formation. Catalyzes the transfer of a GlcNAc subunit on undecaprenyl-pyrophosphoryl-MurNAc-pentapeptide (lipid intermediate I) to form undecaprenyl-pyrophosphoryl-MurNAc-(pentapeptide)GlcNAc (lipid intermediate II). This Xanthomonas campestris pv. campestris (strain B100) protein is UDP-N-acetylglucosamine--N-acetylmuramyl-(pentapeptide) pyrophosphoryl-undecaprenol N-acetylglucosamine transferase.